Consider the following 131-residue polypeptide: Large ribosomal subunit protein bL19 (131 aa).

It belongs to the bacterial ribosomal protein bL19 family.

Its function is as follows. This protein is located at the 30S-50S ribosomal subunit interface and may play a role in the structure and function of the aminoacyl-tRNA binding site. The sequence is that of Large ribosomal subunit protein bL19 from Rhodopseudomonas palustris (strain BisB18).